We begin with the raw amino-acid sequence, 438 residues long: Battenin (438 aa).

The tract at residues 1 to 25 (MGGCAGSRRRLSDSEGEETVPEPRL) is disordered. Residues 1 to 37 (MGGCAGSRRRLSDSEGEETVPEPRLPLLDHQGAHWKN) are Cytoplasmic-facing. Phosphoserine occurs at positions 12 and 14. Residues 38-58 (AVGFWLLGLCNNFSYVVMLSA) form a helical membrane-spanning segment. Over 59–127 (AHDILSHERT…GLHLLPYSPR (69 aa)) the chain is Lumenal. Asn-71 and Asn-85 each carry an N-linked (GlcNAc...) asparagine glycan. Residues 128 to 148 (VLVSGICAAGSFVLVAFSHSV) form a helical membrane-spanning segment. The Cytoplasmic segment spans residues 149–151 (GTS). The helical transmembrane segment at 152–172 (LCGVVLASISSGLGEVTFLSL) threads the bilayer. Residues 173–182 (TAFYPRAVIS) are Lumenal-facing. The chain crosses the membrane as a helical span at residues 183 to 203 (WWSSGTGGAGLLGALSYLGLT). Residues 204-277 (QAGLSPQQTL…SLSLRERWTV (74 aa)) are Cytoplasmic-facing. The disordered stretch occupies residues 237–268 (QDPGGEEEAESSARQPLIRTEAPESKPGSSSS). A Lysosomal targeting motif motif is present at residues 242-244 (EEE). Positions 253-254 (LI) match the Lysosomal targeting motif. Required for AP1G1, AP2A2 and AP3D1 interaction motif. The chain crosses the membrane as a helical span at residues 278–298 (FKGLLWYIVPLVVVYFAEYFI). The Lumenal portion of the chain corresponds to 299-346 (NQGLFELLFFRNTSLSHAQQYRWYQMLYQAGVFASRSSLRCCHIRFTW). Asn-310 carries an N-linked (GlcNAc...) asparagine glycan. A helical membrane pass occupies residues 347–367 (ALALLQCLNLAFLLADVWFGF). The Cytoplasmic portion of the chain corresponds to 368 to 438 (LLSIYFVFLI…PLHDFLCQLS (71 aa)). The Lysosomal targeting motif motif lies at 409 to 419 (MATTCISDTLG). The residue at position 435 (Cys-435) is a Cysteine methyl ester. Cys-435 carries S-farnesyl cysteine lipidation. A propeptide spans 436–438 (QLS) (removed in mature form).

It belongs to the battenin family. As to quaternary structure, interacts with DCTN1, KIF3A, RAB7A and RILP. Interacts with CLN5. Highly glycosylated. In terms of processing, farnesylation is important for trafficking to lysosomes.

The protein localises to the lysosome membrane. The protein resides in the late endosome. Its subcellular location is the lysosome. In terms of biological role, mediates microtubule-dependent, anterograde transport connecting the Golgi network, endosomes, autophagosomes, lysosomes and plasma membrane, and participates in several cellular processes such as regulation of lysosomal pH, lysosome protein degradation, receptor-mediated endocytosis, autophagy, transport of proteins and lipids from the TGN, apoptosis and synaptic transmission. Facilitates the proteins transport from trans-Golgi network (TGN)-to other membrane compartments such as transport of microdomain-associated proteins to the plasma membrane, IGF2R transport to the lysosome where it regulates the CTSD release leading to regulation of CTSD maturation and thereby APP intracellular processing. Moreover regulates CTSD activity in response to osmotic stress. Also binds galactosylceramide and transports it from the trans Golgi to the rafts, which may have immediate and downstream effects on cell survival by modulating ceramide synthesis. At the plasma membrane, regulates actin-dependent events including filopodia formation, cell migration, and pinocytosis through ARF1-CDC42 pathway and also the cytoskeleton organization through interaction with MYH10 and fodrin leading to the regulation of the plasma membrane association of Na+, K+ ATPase complex. Regulates synaptic transmission in the amygdala, hippocampus, and cerebellum through regulation of synaptic vesicles density and their proximity to active zones leading to modulation of short-term plasticity and age-dependent anxious behavior, learning and memory. Regulates autophagic vacuoles (AVs) maturation by modulating the trafficking between endocytic and autophagolysosomal/lysosomal compartments, which involves vesicle fusion leading to regulation of degradation process. Also participates in cellular homeostasis of compounds such as, water, ions, amino acids, proteins and lipids in several tissue namely in brain and kidney through regulation of their transport and synthesis. The polypeptide is Battenin (Macaca fascicularis (Crab-eating macaque)).